We begin with the raw amino-acid sequence, 512 residues long: Transactivator/viroplasmin protein (512 aa).

2 disordered regions span residues 76–123 and 474–512; these read GNER…NPVA and ADSS…IPSI. The span at 476 to 487 shows a compositional bias: polar residues; the sequence is SSSTSGEQNNVE. Over residues 499–512 the composition is skewed to basic and acidic residues; sequence YDERSDDHKRIPSI.

Belongs to the caulimoviridae viroplasmin family.

Its subcellular location is the host cytoplasm. Its function is as follows. Enhances the translation of downstream ORFs on polycistronic mRNAs derived from figwort mosaic virus. This chain is Transactivator/viroplasmin protein, found in Figwort mosaic virus (strain DxS) (FMV).